A 320-amino-acid chain; its full sequence is uncharacterized protein (320 aa).

The segment at 1–40 (MDHPSTSSLPRKKVKAGVKKAGKKTGKKTTGKKKTTPSAI) is disordered. A compositionally biased stretch (basic residues) spans 10–35 (PRKKVKAGVKKAGKKTGKKTTGKKKT). The chain crosses the membrane as a helical span at residues 51-71 (LLVLLAVLSYLAALSLGLYIM). N-linked (GlcNAc...) asparagine glycosylation is found at asparagine 92, asparagine 122, asparagine 154, and asparagine 167. The next 2 membrane-spanning stretches (helical) occupy residues 186–206 (PLVH…AMTG) and 216–236 (MLVT…VTVL). Asparagine 247 carries N-linked (GlcNAc...) asparagine glycosylation. Residues 272–292 (VQGALVAIVAVFYLTMGVVFV) form a helical membrane-spanning segment.

The protein resides in the membrane. It functions in the pathway secondary metabolite biosynthesis; terpenoid biosynthesis. Part of the gene cluster that mediates the biosynthesis of an ophiobolin family sesterterpenoid. This is an uncharacterized protein from Aspergillus terreus.